The sequence spans 363 residues: Endopolygalacturonase A (363 aa).

A signal peptide spans 1 to 20; the sequence is MQLLQSSVIAATVGAALVAA. The propeptide occupies 21-28; sequence VPVELEAR. An intrachain disulfide couples Cys31 to Cys46. PbH1 repeat units follow at residues 158 to 187, 188 to 209, 210 to 230, 239 to 260, 268 to 290, and 302 to 347; these read SDNL…DVGS, STYI…AINS, GSHI…SIGS, VEDV…RIKT, VSNV…IVEQ, and TNGI…SITG. N-linked (GlcNAc...) asparagine glycosylation is present at Asn162. Asp202 serves as the catalytic Proton donor. Cys204 and Cys220 form a disulfide bridge. The active site involves His224. Intrachain disulfides connect Cys330–Cys335 and Cys354–Cys363.

It belongs to the glycosyl hydrolase 28 family.

The protein resides in the secreted. The enzyme catalyses (1,4-alpha-D-galacturonosyl)n+m + H2O = (1,4-alpha-D-galacturonosyl)n + (1,4-alpha-D-galacturonosyl)m.. In terms of biological role, involved in maceration and soft-rotting of plant tissue. Hydrolyzes the 1,4-alpha glycosidic bonds of de-esterified pectate in the smooth region of the plant cell wall. The sequence is that of Endopolygalacturonase A (pgaA) from Aspergillus flavus (strain ATCC MYA-384 / AF70).